The sequence spans 827 residues: Leucine--tRNA ligase (827 aa).

The short motif at 42-52 (PYPSGKLHMGH) is the 'HIGH' region element. The 'KMSKS' region motif lies at 581 to 585 (KMSKS). Lysine 584 lines the ATP pocket.

It belongs to the class-I aminoacyl-tRNA synthetase family.

The protein resides in the cytoplasm. The catalysed reaction is tRNA(Leu) + L-leucine + ATP = L-leucyl-tRNA(Leu) + AMP + diphosphate. The chain is Leucine--tRNA ligase from Desulforamulus reducens (strain ATCC BAA-1160 / DSM 100696 / MI-1) (Desulfotomaculum reducens).